Here is a 147-residue protein sequence, read N- to C-terminus: Large ribosomal subunit protein uL15 (147 aa).

The tract at residues 1 to 42 (MTIKVHHLRPAPGAKTAKTRVGRGEGSKGKTAGRGTKGSKAR) is disordered.

This sequence belongs to the universal ribosomal protein uL15 family. In terms of assembly, part of the 50S ribosomal subunit.

Its function is as follows. Binds to the 23S rRNA. This is Large ribosomal subunit protein uL15 from Salinispora arenicola (strain CNS-205).